The primary structure comprises 258 residues: Dihydroorotate dehydrogenase B (NAD(+)), electron transfer subunit (258 aa).

The 101-residue stretch at 1-101 (MKKAYLTVVS…LGPLGNGYDP (101 aa)) folds into the FAD-binding FR-type domain. FAD contacts are provided by residues 52–55 (RPIS), 69–71 (IYR), and 76–77 (GT). [2Fe-2S] cluster contacts are provided by cysteine 220, cysteine 225, cysteine 228, and cysteine 243.

It belongs to the PyrK family. In terms of assembly, heterotetramer of 2 PyrK and 2 PyrD type B subunits. [2Fe-2S] cluster is required as a cofactor. Requires FAD as cofactor.

Its pathway is pyrimidine metabolism; UMP biosynthesis via de novo pathway; orotate from (S)-dihydroorotate (NAD(+) route): step 1/1. Responsible for channeling the electrons from the oxidation of dihydroorotate from the FMN redox center in the PyrD type B subunit to the ultimate electron acceptor NAD(+). This chain is Dihydroorotate dehydrogenase B (NAD(+)), electron transfer subunit, found in Bacillus pumilus (strain SAFR-032).